The chain runs to 235 residues: Leucyl/phenylalanyl-tRNA--protein transferase (235 aa).

It belongs to the L/F-transferase family.

The protein localises to the cytoplasm. It catalyses the reaction N-terminal L-lysyl-[protein] + L-leucyl-tRNA(Leu) = N-terminal L-leucyl-L-lysyl-[protein] + tRNA(Leu) + H(+). It carries out the reaction N-terminal L-arginyl-[protein] + L-leucyl-tRNA(Leu) = N-terminal L-leucyl-L-arginyl-[protein] + tRNA(Leu) + H(+). The enzyme catalyses L-phenylalanyl-tRNA(Phe) + an N-terminal L-alpha-aminoacyl-[protein] = an N-terminal L-phenylalanyl-L-alpha-aminoacyl-[protein] + tRNA(Phe). Its function is as follows. Functions in the N-end rule pathway of protein degradation where it conjugates Leu, Phe and, less efficiently, Met from aminoacyl-tRNAs to the N-termini of proteins containing an N-terminal arginine or lysine. In Cellvibrio japonicus (strain Ueda107) (Pseudomonas fluorescens subsp. cellulosa), this protein is Leucyl/phenylalanyl-tRNA--protein transferase.